Here is a 382-residue protein sequence, read N- to C-terminus: Mannitol-1-phosphate 5-dehydrogenase (382 aa).

4–15 (AVHFGAGNIGRG) is a binding site for NAD(+).

Belongs to the mannitol dehydrogenase family.

It catalyses the reaction D-mannitol 1-phosphate + NAD(+) = beta-D-fructose 6-phosphate + NADH + H(+). The chain is Mannitol-1-phosphate 5-dehydrogenase from Vibrio parahaemolyticus serotype O3:K6 (strain RIMD 2210633).